A 377-amino-acid polypeptide reads, in one-letter code: Protein-tyrosine sulfotransferase 2 (377 aa).

The Cytoplasmic portion of the chain corresponds to 1–8 (MRLSMRRA). Residues 9-25 (LLAAGLALALVLAVHLG) traverse the membrane as a helical; Signal-anchor for type II membrane protein segment. At 26 to 377 (QRVLECQAVL…NSTSSHLGSS (352 aa)) the chain is on the lumenal side. 78–82 (RSGTT) contributes to the 3'-phosphoadenylyl sulfate binding site. Cys-96 and Cys-156 are joined by a disulfide. Glu-99 serves as the catalytic Proton donor/acceptor. Residues 101 to 105 (RIIPR) are interaction with peptide substrate. The 3'-phosphoadenylyl sulfate site is built by Arg-183, Ser-191, and Arg-195. The cysteines at positions 225 and 233 are disulfide-linked. Residues Tyr-238, 285–294 (STDQVIKPVN), and Lys-300 contribute to the 3'-phosphoadenylyl sulfate site. 2 N-linked (GlcNAc...) asparagine glycosylation sites follow: Asn-343 and Asn-368.

This sequence belongs to the protein sulfotransferase family. Homodimer. Can also form heterodimers with TPST1. Post-translationally, N-glycosylated.

It is found in the golgi apparatus membrane. The enzyme catalyses L-tyrosyl-[protein] + 3'-phosphoadenylyl sulfate = O-sulfo-L-tyrosine-[protein] + adenosine 3',5'-bisphosphate + H(+). In terms of biological role, catalyzes the O-sulfation of tyrosine residues within acidic motifs of polypeptides, using 3'-phosphoadenylyl sulfate (PAPS) as cosubstrate. In Bos taurus (Bovine), this protein is Protein-tyrosine sulfotransferase 2 (TPST2).